The sequence spans 126 residues: Fluoride-specific ion channel FluC (126 aa).

Helical transmembrane passes span 5 to 25, 36 to 56, 69 to 89, and 99 to 119; these read GFVA…FFSV, YGTL…VAFF, LAVT…SEVI, and WAML…AFGI. Gly76 and Thr79 together coordinate Na(+).

This sequence belongs to the fluoride channel Fluc/FEX (TC 1.A.43) family.

It is found in the cell inner membrane. The catalysed reaction is fluoride(in) = fluoride(out). Na(+) is not transported, but it plays an essential structural role and its presence is essential for fluoride channel function. Functionally, fluoride-specific ion channel. Important for reducing fluoride concentration in the cell, thus reducing its toxicity. The polypeptide is Fluoride-specific ion channel FluC (Cupriavidus metallidurans (strain ATCC 43123 / DSM 2839 / NBRC 102507 / CH34) (Ralstonia metallidurans)).